The primary structure comprises 129 residues: Small ribosomal subunit protein uS8mz (129 aa).

The protein belongs to the universal ribosomal protein uS8 family. As to quaternary structure, component of the mitochondrial ribosome small subunit.

It is found in the mitochondrion. This Arabidopsis thaliana (Mouse-ear cress) protein is Small ribosomal subunit protein uS8mz (RPS15AB).